Consider the following 271-residue polypeptide: GPN-loop GTPase 3 (271 aa).

Residue 13–18 (GVGKST) coordinates GTP. A Gly-Pro-Asn (GPN)-loop; involved in dimer interface motif is present at residues 70 to 72 (GPN). Residue 173 to 176 (SKMD) coordinates GTP.

Belongs to the GPN-loop GTPase family. As to quaternary structure, heterodimers with GPN1 or GPN2. Binds to RNA polymerase II (RNAPII).

In terms of biological role, small GTPase required for proper nuclear import of RNA polymerase II and III (RNAPII and RNAPIII). May act at an RNAP assembly step prior to nuclear import. This chain is GPN-loop GTPase 3, found in Yarrowia lipolytica (strain CLIB 122 / E 150) (Yeast).